We begin with the raw amino-acid sequence, 70 residues long: Probable protein transport protein Sec61 subunit gamma (70 aa).

Residues 1-39 are Cytoplasmic-facing; it reads MADQIQEILDVPREFLKDGIQFIKKCQKPDRREFIKISQ. Residues 40-58 form a helical membrane-spanning segment; that stretch reads AVGTGFLIMGAVGYLVKLI. The Extracellular segment spans residues 59–70; the sequence is HIPLNQVLVGGA.

Belongs to the SecE/SEC61-gamma family. As to quaternary structure, heterotrimeric complex composed of SEC61-alpha, SEC61-beta and SEC61-gamma.

It localises to the endoplasmic reticulum membrane. Its function is as follows. Necessary for protein translocation in the endoplasmic reticulum. This chain is Probable protein transport protein Sec61 subunit gamma, found in Neurospora crassa (strain ATCC 24698 / 74-OR23-1A / CBS 708.71 / DSM 1257 / FGSC 987).